The following is a 549-amino-acid chain: MARDATKLEATVAKLKKHWAESAPRDMRAAFSTDPGRFGRYSLCLDDLLFDWSKCRVNDETMALLKELAVAADVEGRRAAMFAGEHINNTEDRAVLHVALRDTSSKEVLVDGHNVLPDVKHVLDRMAAFADGIRSGALKGATGRKITDIVNIGIGGSDLGPVMATLALAPYHDEPRAHFVSNIDGAHIADTLSPLDPASTLIIVASKTFTTIETMTNAQTARKWVADTLGEAAVGAHFAAVSTALDKVAAFGIPEDRVFGFWDWVGGRYSVWSAIGLPVMIAVGPDNFRKFLAGAHAMDVHFRDAPLEKNLPVMLGLIGYWHRAICGYGSRAIIPYDQRLSRLPAYLQQLDMESNGKSVTLDGKPVSGPTGPVVWGEPGTNGQHAFFQLLHQGTDTIPLEFIVAAKGHEPTLDHQHEMLMANCLAQSEALMKGRTLDEARAQLQAKNLPASQVERIAPHRVFSGNRPSLTLIHDMLDPYALGRLIALYEHRVFVEAQIFGINAFDQWGVELGKELATELLPVVSGKEGASGRDASTQGLVAHLHARRKA.

The active-site Proton donor is glutamate 353. Residues histidine 384 and lysine 513 contribute to the active site.

The protein belongs to the GPI family.

It is found in the cytoplasm. The catalysed reaction is alpha-D-glucose 6-phosphate = beta-D-fructose 6-phosphate. It functions in the pathway carbohydrate biosynthesis; gluconeogenesis. It participates in carbohydrate degradation; glycolysis; D-glyceraldehyde 3-phosphate and glycerone phosphate from D-glucose: step 2/4. Catalyzes the reversible isomerization of glucose-6-phosphate to fructose-6-phosphate. This Brucella abortus (strain S19) protein is Glucose-6-phosphate isomerase.